The sequence spans 299 residues: Inosose dehydratase (299 aa).

It belongs to the IolE/MocC family. Requires glutathione as cofactor. It depends on Co(2+) as a cofactor. The cofactor is Mn(2+).

The enzyme catalyses scyllo-inosose = 3D-3,5/4-trihydroxycyclohexane-1,2-dione + H2O. Catalyzes the dehydration of inosose (2-keto-myo-inositol, 2KMI or 2,4,6/3,5-pentahydroxycyclohexanone) to 3D-(3,5/4)-trihydroxycyclohexane-1,2-dione (D-2,3-diketo-4-deoxy-epi-inositol). This chain is Inosose dehydratase, found in Klebsiella pneumoniae subsp. pneumoniae (strain ATCC 700721 / MGH 78578).